Consider the following 459-residue polypeptide: Phosphomethylpyrimidine synthase (459 aa).

Residues asparagine 80, methionine 109, tyrosine 139, histidine 175, 195–197 (SRG), 236–239 (DSLR), and glutamate 275 each bind substrate. Histidine 279 is a Zn(2+) binding site. Tyrosine 302 contributes to the substrate binding site. Residue histidine 343 coordinates Zn(2+). Residues cysteine 423, cysteine 426, and cysteine 431 each contribute to the [4Fe-4S] cluster site.

The protein belongs to the ThiC family. It depends on [4Fe-4S] cluster as a cofactor.

The catalysed reaction is 5-amino-1-(5-phospho-beta-D-ribosyl)imidazole + S-adenosyl-L-methionine = 4-amino-2-methyl-5-(phosphooxymethyl)pyrimidine + CO + 5'-deoxyadenosine + formate + L-methionine + 3 H(+). Its pathway is cofactor biosynthesis; thiamine diphosphate biosynthesis. Functionally, catalyzes the synthesis of the hydroxymethylpyrimidine phosphate (HMP-P) moiety of thiamine from aminoimidazole ribotide (AIR) in a radical S-adenosyl-L-methionine (SAM)-dependent reaction. The chain is Phosphomethylpyrimidine synthase from Prochlorococcus marinus (strain MIT 9303).